A 96-amino-acid chain; its full sequence is Large ribosomal subunit protein eL14 (96 aa).

Belongs to the eukaryotic ribosomal protein eL14 family.

This is Large ribosomal subunit protein eL14 from Saccharolobus islandicus (strain M.14.25 / Kamchatka #1) (Sulfolobus islandicus).